The sequence spans 219 residues: Claudin-6 (219 aa).

Residues 1–7 (MASTGLQ) are Cytoplasmic-facing. A helical membrane pass occupies residues 8-28 (ILGIVLTLLGWVNALVSCALP). Over 29-81 (MWKVTAFIGNSIVVAQMVWEGLWMSCVVQSTGQMQCKVYDSLLALPQDLQAAR) the chain is Extracellular. The helical transmembrane segment at 82 to 102 (ALCVVTLLIVLLGLLVYLAGA) threads the bilayer. At 103-116 (KCTTCVEDRNSKSR) the chain is on the cytoplasmic side. A helical transmembrane segment spans residues 117 to 137 (LVLISGIIFVISGVLTLIPVC). The Extracellular segment spans residues 138-163 (WTAHSIIQDFYNPLVADAQKRELGAS). The chain crosses the membrane as a helical span at residues 164-184 (LYLGWAASGLLLLGGGLLCCA). The Cytoplasmic portion of the chain corresponds to 185 to 219 (CSSGGTQGPRHYMACYSTSVPHSRGPSEYPTKNYV). Phosphoserine is present on residues S201, S203, S207, and S211. Positions 218–219 (YV) are interactions with TJP1, TJP2 and TJP3.

The protein belongs to the claudin family. In terms of assembly, directly interacts with TJP1/ZO-1, TJP2/ZO-2 and TJP3/ZO-3. Interacts with CLDN1, CD81 and OCLN. In terms of tissue distribution, expressed mostly in embryonic tissues.

The protein resides in the cell junction. Its subcellular location is the tight junction. It is found in the cell membrane. In terms of biological role, plays a major role in tight junction-specific obliteration of the intercellular space, through calcium-independent cell-adhesion activity. This is Claudin-6 (Cldn6) from Mus musculus (Mouse).